Consider the following 363-residue polypeptide: UDP-N-acetylglucosamine--N-acetylmuramyl-(pentapeptide) pyrophosphoryl-undecaprenol N-acetylglucosamine transferase (363 aa).

UDP-N-acetyl-alpha-D-glucosamine contacts are provided by residues 10–12 (TGG), Asn124, Ser195, Ile250, and Gln295.

It belongs to the glycosyltransferase 28 family. MurG subfamily.

It is found in the cell membrane. It catalyses the reaction Mur2Ac(oyl-L-Ala-gamma-D-Glu-L-Lys-D-Ala-D-Ala)-di-trans,octa-cis-undecaprenyl diphosphate + UDP-N-acetyl-alpha-D-glucosamine = beta-D-GlcNAc-(1-&gt;4)-Mur2Ac(oyl-L-Ala-gamma-D-Glu-L-Lys-D-Ala-D-Ala)-di-trans,octa-cis-undecaprenyl diphosphate + UDP + H(+). The protein operates within cell wall biogenesis; peptidoglycan biosynthesis. Its function is as follows. Cell wall formation. Catalyzes the transfer of a GlcNAc subunit on undecaprenyl-pyrophosphoryl-MurNAc-pentapeptide (lipid intermediate I) to form undecaprenyl-pyrophosphoryl-MurNAc-(pentapeptide)GlcNAc (lipid intermediate II). This Lactiplantibacillus plantarum (strain ATCC BAA-793 / NCIMB 8826 / WCFS1) (Lactobacillus plantarum) protein is UDP-N-acetylglucosamine--N-acetylmuramyl-(pentapeptide) pyrophosphoryl-undecaprenol N-acetylglucosamine transferase.